A 285-amino-acid chain; its full sequence is Polyamine aminopropyltransferase (285 aa).

The PABS domain maps to 2–237; that stretch reads QMWFSQYHTV…GYWLFGFASK (236 aa). Residue Gln-31 coordinates S-methyl-5'-thioadenosine. Asp-86 is a spermidine binding site. Residues Glu-106 and 137-138 each bind S-methyl-5'-thioadenosine; that span reads DG. Asp-155 (proton acceptor) is an active-site residue. Spermidine is bound at residue 155-158; sequence DSTD.

It belongs to the spermidine/spermine synthase family. Homodimer or homotetramer.

Its subcellular location is the cytoplasm. The catalysed reaction is S-adenosyl 3-(methylsulfanyl)propylamine + putrescine = S-methyl-5'-thioadenosine + spermidine + H(+). It participates in amine and polyamine biosynthesis; spermidine biosynthesis; spermidine from putrescine: step 1/1. Functionally, catalyzes the irreversible transfer of a propylamine group from the amino donor S-adenosylmethioninamine (decarboxy-AdoMet) to putrescine (1,4-diaminobutane) to yield spermidine. The chain is Polyamine aminopropyltransferase from Agathobacter rectalis (strain ATCC 33656 / DSM 3377 / JCM 17463 / KCTC 5835 / VPI 0990) (Eubacterium rectale).